The sequence spans 209 residues: Uracil phosphoribosyltransferase (209 aa).

Residues Arg79, Arg104, and 131–139 (DPMLATGGT) each bind 5-phospho-alpha-D-ribose 1-diphosphate. Uracil-binding positions include Ile194 and 199–201 (GDA). Asp200 provides a ligand contact to 5-phospho-alpha-D-ribose 1-diphosphate.

Belongs to the UPRTase family. The cofactor is Mg(2+).

The catalysed reaction is UMP + diphosphate = 5-phospho-alpha-D-ribose 1-diphosphate + uracil. It participates in pyrimidine metabolism; UMP biosynthesis via salvage pathway; UMP from uracil: step 1/1. Allosterically activated by GTP. Functionally, catalyzes the conversion of uracil and 5-phospho-alpha-D-ribose 1-diphosphate (PRPP) to UMP and diphosphate. In Pseudoalteromonas translucida (strain TAC 125), this protein is Uracil phosphoribosyltransferase.